The chain runs to 147 residues: UPF0178 protein Nther_1836 (147 aa).

It belongs to the UPF0178 family.

The chain is UPF0178 protein Nther_1836 from Natranaerobius thermophilus (strain ATCC BAA-1301 / DSM 18059 / JW/NM-WN-LF).